Reading from the N-terminus, the 129-residue chain is Serum amyloid A-2 protein (129 aa).

The signal sequence occupies residues 1 to 18 (MKLFTGLIFCSLVLGVSS). At Gln19 the chain carries Pyrrolidone carboxylic acid. Residues 92 to 129 (GDSGHGVEDSKADQAANEWGRSGKDPNHFRPSGLPDKY) form a disordered region.

It belongs to the SAA family. In terms of assembly, apolipoprotein of the HDL complex. In terms of tissue distribution, expressed by the liver; secreted in plasma.

The protein resides in the secreted. Functionally, major acute phase reactant. This Neovison vison (American mink) protein is Serum amyloid A-2 protein (SAA2P0DJI9).